Consider the following 255-residue polypeptide: 4-hydroxy-tetrahydrodipicolinate reductase (255 aa).

NAD(+) is bound by residues 13-18 (GCNGKM), 90-92 (CTT), and 114-117 (SANM). H147 acts as the Proton donor/acceptor in catalysis. H148 is a (S)-2,3,4,5-tetrahydrodipicolinate binding site. The active-site Proton donor is the K151. 157–158 (GT) serves as a coordination point for (S)-2,3,4,5-tetrahydrodipicolinate.

This sequence belongs to the DapB family.

It localises to the cytoplasm. It catalyses the reaction (S)-2,3,4,5-tetrahydrodipicolinate + NAD(+) + H2O = (2S,4S)-4-hydroxy-2,3,4,5-tetrahydrodipicolinate + NADH + H(+). The catalysed reaction is (S)-2,3,4,5-tetrahydrodipicolinate + NADP(+) + H2O = (2S,4S)-4-hydroxy-2,3,4,5-tetrahydrodipicolinate + NADPH + H(+). It participates in amino-acid biosynthesis; L-lysine biosynthesis via DAP pathway; (S)-tetrahydrodipicolinate from L-aspartate: step 4/4. Functionally, catalyzes the conversion of 4-hydroxy-tetrahydrodipicolinate (HTPA) to tetrahydrodipicolinate. This chain is 4-hydroxy-tetrahydrodipicolinate reductase, found in Clostridium tetani (strain Massachusetts / E88).